The chain runs to 347 residues: D-alanine--D-alanine ligase (347 aa).

In terms of domain architecture, ATP-grasp spans 131–333; the sequence is KRVLESAGIA…YPELIERLVD (203 aa). 161-216 provides a ligand contact to ATP; the sequence is EEKLAYPVFTKPSNMGSSVGISKSENQEELRQALKLAFRYDSRVLVEQGVNAREIE. Mg(2+) is bound by residues aspartate 287, glutamate 300, and asparagine 302.

This sequence belongs to the D-alanine--D-alanine ligase family. Requires Mg(2+) as cofactor. It depends on Mn(2+) as a cofactor.

It localises to the cytoplasm. The enzyme catalyses 2 D-alanine + ATP = D-alanyl-D-alanine + ADP + phosphate + H(+). Its pathway is cell wall biogenesis; peptidoglycan biosynthesis. In terms of biological role, cell wall formation. The sequence is that of D-alanine--D-alanine ligase from Streptococcus pneumoniae serotype 19F (strain G54).